Here is a 397-residue protein sequence, read N- to C-terminus: Riboflavin biosynthesis protein RibBA (397 aa).

The DHBP synthase stretch occupies residues Met1–His199. D-ribulose 5-phosphate is bound by residues Arg26–Glu27, Asp31, Arg138–Thr142, and Glu162. Glu27 lines the Mg(2+) pocket. His141 provides a ligand contact to Mg(2+). The interval His200 to Leu397 is GTP cyclohydrolase II. Residue Arg250–Glu254 participates in GTP binding. The Zn(2+) site is built by Cys255, Cys266, and Cys268. Residues Gln271, Glu293–Arg295, and Thr315 each bind GTP. Catalysis depends on Asp327, which acts as the Proton acceptor; for GTP cyclohydrolase activity. Residue Arg329 is the Nucleophile; for GTP cyclohydrolase activity of the active site. GTP-binding residues include Thr350 and Lys355.

The protein in the N-terminal section; belongs to the DHBP synthase family. This sequence in the C-terminal section; belongs to the GTP cyclohydrolase II family. Mg(2+) serves as cofactor. Mn(2+) is required as a cofactor. It depends on Zn(2+) as a cofactor.

The enzyme catalyses D-ribulose 5-phosphate = (2S)-2-hydroxy-3-oxobutyl phosphate + formate + H(+). It carries out the reaction GTP + 4 H2O = 2,5-diamino-6-hydroxy-4-(5-phosphoribosylamino)-pyrimidine + formate + 2 phosphate + 3 H(+). The protein operates within cofactor biosynthesis; riboflavin biosynthesis; 2-hydroxy-3-oxobutyl phosphate from D-ribulose 5-phosphate: step 1/1. It participates in cofactor biosynthesis; riboflavin biosynthesis; 5-amino-6-(D-ribitylamino)uracil from GTP: step 1/4. Catalyzes the conversion of D-ribulose 5-phosphate to formate and 3,4-dihydroxy-2-butanone 4-phosphate. In terms of biological role, catalyzes the conversion of GTP to 2,5-diamino-6-ribosylamino-4(3H)-pyrimidinone 5'-phosphate (DARP), formate and pyrophosphate. The chain is Riboflavin biosynthesis protein RibBA from Bacillus cereus (strain G9842).